We begin with the raw amino-acid sequence, 223 residues long: UPF0441 protein KPN78578_33850 (223 aa).

Residues 165–223 (SYGAAQPGRTMNVPKTAMAPKPATTTTVTRGGFGESVAKQSTMQRSAAGSTSSSRSMGG) form a disordered region. 2 stretches are compositionally biased toward low complexity: residues 177–193 (VPKTAMAPKPATTTTVT) and 209–223 (RSAAGSTSSSRSMGG).

The protein belongs to the UPF0441 family.

The protein is UPF0441 protein KPN78578_33850 of Klebsiella pneumoniae subsp. pneumoniae (strain ATCC 700721 / MGH 78578).